The following is a 759-amino-acid chain: RNA-binding protein 28 (759 aa).

At A2 the chain carries N-acetylalanine. In terms of domain architecture, RRM 1 spans 4 to 80 (LTLFVGRLPP…CKINVTVAKK (77 aa)). Positions 84-105 (NKTKEKGKNENSECPKKEPKAK) are disordered. Over residues 85 to 101 (KTKEKGKNENSECPKKE) the composition is skewed to basic and acidic residues. Residues 114–191 (ARLIIRNLSF…RTVAVDWAVA (78 aa)) form the RRM 2 domain. S122 is modified (phosphoserine). Positions 201–330 (VSAIGEEKSH…NKKKRKLPSD (130 aa)) are disordered. The span at 205-224 (GEEKSHESKHQESVKKKGRE) shows a compositional bias: basic and acidic residues. Composition is skewed to acidic residues over residues 225–256 (EEDM…EEEN) and 284–313 (SEED…EEQE). RRM domains follow at residues 335–419 (KTVF…LAVT) and 487–597 (TRLC…RSLQ). S397 is modified (phosphoserine). Residues 594–759 (RSLQKMRSKP…LAKRSKWFDS (166 aa)) are disordered. The segment covering 615–640 (PAKDQQQKAAQHHTEEQSKVPPEQKR) has biased composition (basic and acidic residues). K653 is covalently cross-linked (Glycyl lysine isopeptide (Lys-Gly) (interchain with G-Cter in SUMO2)). Over residues 689 to 698 (VKPVHPKKPK) the composition is skewed to basic residues. A compositionally biased stretch (polar residues) spans 700–715 (QINQWKQEKQQLSSEQ).

Interacts with U1, U2, U4, U5, and U6 spliceosomal small nuclear RNAs (snRNAs). Ubiquitously expressed.

The protein localises to the nucleus. It is found in the nucleolus. Its function is as follows. Nucleolar component of the spliceosomal ribonucleoprotein complexes. The sequence is that of RNA-binding protein 28 (RBM28) from Homo sapiens (Human).